A 683-amino-acid polypeptide reads, in one-letter code: Leishmanolysin-like peptidase (683 aa).

Residue histidine 257 participates in Zn(2+) binding. The active site involves glutamate 258. Zn(2+) is bound by residues histidine 261 and histidine 364.

The protein belongs to the peptidase M8 family. Zn(2+) serves as cofactor.

It is found in the cytoplasm. Functionally, essential for the coordination of mitotic progression, and also plays a role in cell migration. The polypeptide is Leishmanolysin-like peptidase (Invadolysin) (Drosophila melanogaster (Fruit fly)).